Here is a 359-residue protein sequence, read N- to C-terminus: NADPH HC-toxin reductase 2 (359 aa).

Residues Arg-39, 67–68 (DL), 87–89 (VAT), Tyr-177, Lys-181, 206–209 (LGLV), and Thr-221 contribute to the NADP(+) site. Lys-181 (proton donor) is an active-site residue.

The protein belongs to the NAD(P)-dependent epimerase/dehydratase family.

In terms of biological role, in tandem with Hm1, NADPH-dependent HC toxin reductase (HCTR), which inactivates HC toxin, a cyclic tetrapeptide produced by the fungus Cochliobolus carbonum to permit infection and acting as an inhibitor of host histone deacetylases (HDACs), thus conferring resistance against C.carbonum race 1 in resistant cultivars (e.g. cv. B73 and cv. Wisconsin 22). Catalyzes the production of 8-hydroxy derivative of HC-toxin via the reduction of the 8-keto group of 2-amino-9,10-epoxy-8-oxo-decanoic acid, an amino acid of the HC-toxin. The sequence is that of NADPH HC-toxin reductase 2 from Zea mays (Maize).